The chain runs to 257 residues: NAD-capped RNA hydrolase NudC (257 aa).

Positions 25 and 69 each coordinate substrate. Zn(2+) is bound by residues cysteine 98 and cysteine 101. A substrate-binding site is contributed by glutamate 111. 2 residues coordinate Zn(2+): cysteine 116 and cysteine 119. Tyrosine 124 is a binding site for substrate. Residues 125 to 248 (PQIAPCIIVA…TVARRLIEDT (124 aa)) form the Nudix hydrolase domain. A divalent metal cation is bound by residues alanine 158, glutamate 174, and glutamate 178. Residues 159–180 (GFVEVGETLEQAVAREVMEESG) carry the Nudix box motif. Residue 192–199 (QPWPFPQS) coordinates substrate. Residue glutamate 219 coordinates a divalent metal cation. Alanine 241 is a binding site for substrate.

Belongs to the Nudix hydrolase family. NudC subfamily. Homodimer. It depends on Mg(2+) as a cofactor. Mn(2+) is required as a cofactor. Zn(2+) serves as cofactor.

It catalyses the reaction a 5'-end NAD(+)-phospho-ribonucleoside in mRNA + H2O = a 5'-end phospho-adenosine-phospho-ribonucleoside in mRNA + beta-nicotinamide D-ribonucleotide + 2 H(+). It carries out the reaction NAD(+) + H2O = beta-nicotinamide D-ribonucleotide + AMP + 2 H(+). The enzyme catalyses NADH + H2O = reduced beta-nicotinamide D-ribonucleotide + AMP + 2 H(+). Functionally, mRNA decapping enzyme that specifically removes the nicotinamide adenine dinucleotide (NAD) cap from a subset of mRNAs by hydrolyzing the diphosphate linkage to produce nicotinamide mononucleotide (NMN) and 5' monophosphate mRNA. The NAD-cap is present at the 5'-end of some mRNAs and stabilizes RNA against 5'-processing. Has preference for mRNAs with a 5'-end purine. Catalyzes the hydrolysis of a broad range of dinucleotide pyrophosphates. In Shigella flexneri, this protein is NAD-capped RNA hydrolase NudC.